The primary structure comprises 216 residues: Kynurenine formamidase (216 aa).

Substrate is bound at residue W25. 3 residues coordinate Zn(2+): H55, H59, and D61. H65 acts as the Proton donor/acceptor in catalysis. Zn(2+)-binding residues include H167 and E179.

It belongs to the Cyclase 1 superfamily. KynB family. In terms of assembly, homodimer. It depends on Zn(2+) as a cofactor.

It catalyses the reaction N-formyl-L-kynurenine + H2O = L-kynurenine + formate + H(+). Its pathway is amino-acid degradation; L-tryptophan degradation via kynurenine pathway; L-kynurenine from L-tryptophan: step 2/2. Its function is as follows. Catalyzes the hydrolysis of N-formyl-L-kynurenine to L-kynurenine, the second step in the kynurenine pathway of tryptophan degradation. The chain is Kynurenine formamidase from Cupriavidus necator (strain ATCC 17699 / DSM 428 / KCTC 22496 / NCIMB 10442 / H16 / Stanier 337) (Ralstonia eutropha).